The chain runs to 256 residues: 2,3,4,5-tetrahydropyridine-2,6-dicarboxylate N-acetyltransferase (256 aa).

Belongs to the transferase hexapeptide repeat family. DapH subfamily.

It catalyses the reaction (S)-2,3,4,5-tetrahydrodipicolinate + acetyl-CoA + H2O = L-2-acetamido-6-oxoheptanedioate + CoA. It functions in the pathway amino-acid biosynthesis; L-lysine biosynthesis via DAP pathway; LL-2,6-diaminopimelate from (S)-tetrahydrodipicolinate (acetylase route): step 1/3. In terms of biological role, catalyzes the transfer of an acetyl group from acetyl-CoA to tetrahydrodipicolinate. In Lactococcus lactis subsp. lactis (strain IL1403) (Streptococcus lactis), this protein is 2,3,4,5-tetrahydropyridine-2,6-dicarboxylate N-acetyltransferase.